Here is a 358-residue protein sequence, read N- to C-terminus: Carbamoyl phosphate synthase small chain (358 aa).

2 CPSase regions span residues 1-168 (MYNR…PALG) and 1-171 (MYNR…GRGR). L-glutamine contacts are provided by serine 46, glycine 220, and glycine 222. A Glutamine amidotransferase type-1 domain is found at 172–358 (RVVLVDLGMK…FIKNIDNNMK (187 aa)). Cysteine 247 (nucleophile) is an active-site residue. The L-glutamine site is built by methionine 248, glutamine 251, asparagine 289, glycine 291, and tyrosine 292. Catalysis depends on residues histidine 332 and glutamate 334.

Belongs to the CarA family. In terms of assembly, composed of two chains; the small (or glutamine) chain promotes the hydrolysis of glutamine to ammonia, which is used by the large (or ammonia) chain to synthesize carbamoyl phosphate. Tetramer of heterodimers (alpha,beta)4.

It catalyses the reaction hydrogencarbonate + L-glutamine + 2 ATP + H2O = carbamoyl phosphate + L-glutamate + 2 ADP + phosphate + 2 H(+). The catalysed reaction is L-glutamine + H2O = L-glutamate + NH4(+). Its pathway is amino-acid biosynthesis; L-arginine biosynthesis; carbamoyl phosphate from bicarbonate: step 1/1. The protein operates within pyrimidine metabolism; UMP biosynthesis via de novo pathway; (S)-dihydroorotate from bicarbonate: step 1/3. In terms of biological role, small subunit of the glutamine-dependent carbamoyl phosphate synthetase (CPSase). CPSase catalyzes the formation of carbamoyl phosphate from the ammonia moiety of glutamine, carbonate, and phosphate donated by ATP, constituting the first step of 2 biosynthetic pathways, one leading to arginine and/or urea and the other to pyrimidine nucleotides. The small subunit (glutamine amidotransferase) binds and cleaves glutamine to supply the large subunit with the substrate ammonia. The sequence is that of Carbamoyl phosphate synthase small chain from Fusobacterium nucleatum subsp. nucleatum (strain ATCC 25586 / DSM 15643 / BCRC 10681 / CIP 101130 / JCM 8532 / KCTC 2640 / LMG 13131 / VPI 4355).